A 232-amino-acid chain; its full sequence is Rhamnogalacturonan acetylesterase RhgT (232 aa).

Ser14 acts as the Nucleophile in catalysis. Catalysis depends on residues Glu191 and His195.

Belongs to the 'GDSL' lipolytic enzyme family. As to quaternary structure, monomer.

Almost completely inhibited by diethylpyrocarbonate at 5 mM and completely inhibited by phenylmethylsulfonyl fluoride (PMSF) at 50 mM. Dimethyl phosphite achieves only a 53% inhibition. Also inhibited by metal ions (magnesium, manganese and calcium) and chelating agent (EDTA) at the same level. Functionally, may play a role in the degradation of type I rhamnogalacturonan derived from plant cell walls. This enzyme has a broad substrate specificity, and shows strong preference for glucose pentaacetate, beta-naphthylacetate, and p-nitrophenyl acetate (pNPA). Also active toward acetylated xylan. The polypeptide is Rhamnogalacturonan acetylesterase RhgT (rhgT) (Bacillus subtilis (strain 168)).